The chain runs to 73 residues: UPF0235 protein PCC7424_0673 (73 aa).

This sequence belongs to the UPF0235 family.

The chain is UPF0235 protein PCC7424_0673 from Gloeothece citriformis (strain PCC 7424) (Cyanothece sp. (strain PCC 7424)).